Consider the following 401-residue polypeptide: 8-amino-7-oxononanoate synthase (401 aa).

A substrate-binding site is contributed by arginine 19. Position 106–107 (106–107) interacts with pyridoxal 5'-phosphate; the sequence is GY. Residue histidine 131 coordinates substrate. Pyridoxal 5'-phosphate is bound by residues serine 176, histidine 204, and threonine 233. At lysine 236 the chain carries N6-(pyridoxal phosphate)lysine. Threonine 350 serves as a coordination point for substrate.

It belongs to the class-II pyridoxal-phosphate-dependent aminotransferase family. BioF subfamily. As to quaternary structure, homodimer. It depends on pyridoxal 5'-phosphate as a cofactor.

The catalysed reaction is 6-carboxyhexanoyl-[ACP] + L-alanine + H(+) = (8S)-8-amino-7-oxononanoate + holo-[ACP] + CO2. It functions in the pathway cofactor biosynthesis; biotin biosynthesis. In terms of biological role, catalyzes the decarboxylative condensation of pimeloyl-[acyl-carrier protein] and L-alanine to produce 8-amino-7-oxononanoate (AON), [acyl-carrier protein], and carbon dioxide. This is 8-amino-7-oxononanoate synthase from Pseudomonas aeruginosa (strain ATCC 15692 / DSM 22644 / CIP 104116 / JCM 14847 / LMG 12228 / 1C / PRS 101 / PAO1).